A 200-amino-acid chain; its full sequence is Recombination protein RecR (200 aa).

A C4-type zinc finger spans residues 59–74 (CSVCFHLSADPVCDIC). Residues 82-176 (TVICVVADSR…RVTRIAFGLP (95 aa)) form the Toprim domain.

This sequence belongs to the RecR family.

May play a role in DNA repair. It seems to be involved in an RecBC-independent recombinational process of DNA repair. It may act with RecF and RecO. The protein is Recombination protein RecR of Acaryochloris marina (strain MBIC 11017).